The primary structure comprises 180 residues: NAD(P)H-quinone oxidoreductase subunit I, chloroplastic (180 aa).

4Fe-4S ferredoxin-type domains lie at 55-84 (GRIH…VDWR) and 95-124 (LNYS…MTEE). Residues Cys64, Cys67, Cys70, Cys74, Cys104, Cys107, Cys110, and Cys114 each coordinate [4Fe-4S] cluster.

Belongs to the complex I 23 kDa subunit family. NDH is composed of at least 16 different subunits, 5 of which are encoded in the nucleus. It depends on [4Fe-4S] cluster as a cofactor.

The protein resides in the plastid. Its subcellular location is the chloroplast thylakoid membrane. The enzyme catalyses a plastoquinone + NADH + (n+1) H(+)(in) = a plastoquinol + NAD(+) + n H(+)(out). The catalysed reaction is a plastoquinone + NADPH + (n+1) H(+)(in) = a plastoquinol + NADP(+) + n H(+)(out). Functionally, NDH shuttles electrons from NAD(P)H:plastoquinone, via FMN and iron-sulfur (Fe-S) centers, to quinones in the photosynthetic chain and possibly in a chloroplast respiratory chain. The immediate electron acceptor for the enzyme in this species is believed to be plastoquinone. Couples the redox reaction to proton translocation, and thus conserves the redox energy in a proton gradient. This chain is NAD(P)H-quinone oxidoreductase subunit I, chloroplastic, found in Liriodendron tulipifera (Tuliptree).